Here is a 234-residue protein sequence, read N- to C-terminus: Glutathione S-transferase U16 (234 aa).

Residues 5-85 form the GST N-terminal domain; it reads EEVKLLGVWY…YIDETWNSSA (81 aa). Glutathione is bound by residues 15-16, 42-43, 56-57, and 69-70; these read SP, SK, KV, and ES. The GST C-terminal domain maps to 92-219; that stretch reads HPYDRALARF…APEIEKVAEF (128 aa).

This sequence belongs to the GST superfamily. Tau family.

It is found in the cytoplasm. The protein resides in the cytosol. It catalyses the reaction RX + glutathione = an S-substituted glutathione + a halide anion + H(+). May be involved in the conjugation of reduced glutathione to a wide number of exogenous and endogenous hydrophobic electrophiles and have a detoxification role against certain herbicides. The protein is Glutathione S-transferase U16 (GSTU16) of Arabidopsis thaliana (Mouse-ear cress).